A 247-amino-acid chain; its full sequence is LHFPL tetraspan subfamily member 4 protein (247 aa).

4 helical membrane passes run 22 to 42 (IGVL…VVFI), 97 to 117 (FFVL…SLFF), 127 to 147 (ICAW…MIFP), and 178 to 198 (ILAI…FVLG).

It belongs to the LHFP family. In terms of assembly, interacts with GABA(A) receptor subunits. Identified in a complex of 720 kDa composed of LHFPL4, NLGN2, GABRA1, GABRB2, GABRG2 and GABRB3. Interacts with GABRB3. Interacts with GABRA2. Interacts with GABRG2. Interacts with GABRA1. Interacts with NLGN2; leading to mutual regulation of protein level and synaptic clustering.

The protein localises to the cell projection. It is found in the dendrite. The protein resides in the postsynaptic cell membrane. In terms of biological role, plays a role in the regulation of inhibitory synapse formation and function by being involved in maintening gamma-aminobutyric acid receptors (GABAARs) clustering and their associated scaffold proteins at inhibitory synaptic sites. Acts in concert with NLGN2 to recruit or stabilize GABAARs. This is LHFPL tetraspan subfamily member 4 protein from Homo sapiens (Human).